Reading from the N-terminus, the 240-residue chain is MQAARGGAGRPGREGRGLERECERSPGPGVAMPPGPCAWPPRAALRLWLGCVCFALVQADSPSAPVNVTVRHLKANSAVVSWDVLEDEVVIGFAISQQKKDVRMLRFIQEVNTTTRSCALWDLEEDTEYIVHVQAISIQGQSPASEPVLFKTPREAEKMASKNKDEVTMKEMGRNQQLRTGEVLIIVVVLFMWAGVIALFCRQYDIIKDNEPNNNKEKTKSASETSTPEHQGGGLLRSKI.

Residues 1–10 (MQAARGGAGR) are compositionally biased toward gly residues. The tract at residues 1–33 (MQAARGGAGRPGREGRGLERECERSPGPGVAMP) is disordered. Over residues 11-24 (PGREGRGLERECER) the composition is skewed to basic and acidic residues. Residues 64–155 (APVNVTVRHL…EPVLFKTPRE (92 aa)) enclose the Fibronectin type-III domain. Asparagine 67 and asparagine 112 each carry an N-linked (GlcNAc...) asparagine glycan. A helical membrane pass occupies residues 181–201 (GEVLIIVVVLFMWAGVIALFC). Positions 210–221 (NEPNNNKEKTKS) are enriched in basic and acidic residues. The tract at residues 210–240 (NEPNNNKEKTKSASETSTPEHQGGGLLRSKI) is disordered. Residues 231–240 (QGGGLLRSKI) show a composition bias toward gly residues. The Microbody targeting signal signature appears at 238-240 (SKI).

As to quaternary structure, dimer; may exist in other oligomeric forms. Post-translationally, the extracellular domain is cleaved and released from the cell membrane. In terms of processing, N-Glycosylated. In terms of tissue distribution, in adult, it is highly expressed in skeletal muscle, heart and brain.

The protein localises to the cell membrane. It localises to the peroxisome membrane. Its subcellular location is the secreted. Its function is as follows. Mediates beneficial effects of muscular exercise. Induces browning of white adipose tissue by stimulating UCP1 expression, at least in part, via the nuclear receptor PPARA. The chain is Fibronectin type III domain-containing protein 5 (Fndc5) from Mus musculus (Mouse).